The chain runs to 197 residues: UPF0301 protein A2cp1_4106 (197 aa).

The protein belongs to the UPF0301 (AlgH) family.

The protein is UPF0301 protein A2cp1_4106 of Anaeromyxobacter dehalogenans (strain 2CP-1 / ATCC BAA-258).